The following is a 304-amino-acid chain: Recombination-associated protein RdgC (304 aa).

The protein belongs to the RdgC family.

The protein localises to the cytoplasm. Its subcellular location is the nucleoid. Functionally, may be involved in recombination. The protein is Recombination-associated protein RdgC of Shewanella putrefaciens (strain CN-32 / ATCC BAA-453).